The sequence spans 542 residues: Isocitrate lyase (542 aa).

Substrate is bound at residue 102–104; that stretch reads SGW. Aspartate 170 is a Mg(2+) binding site. Cysteine 208 acts as the Proton acceptor in catalysis. Substrate-binding positions include 209 to 210, arginine 245, 428 to 432, and threonine 462; these read GH and NLSPS.

Belongs to the isocitrate lyase/PEP mutase superfamily. Isocitrate lyase family. Homotetramer. The cofactor is Mg(2+).

The protein resides in the glyoxysome. The enzyme catalyses D-threo-isocitrate = glyoxylate + succinate. It carries out the reaction (2S,3R)-3-hydroxybutane-1,2,3-tricarboxylate = pyruvate + succinate. Its pathway is carbohydrate metabolism; glyoxylate cycle; (S)-malate from isocitrate: step 1/2. In terms of biological role, catalyzes the formation of succinate and glyoxylate from isocitrate, a key step of the glyoxylate cycle, which operates as an anaplerotic route for replenishing the tricarboxylic acid cycle. Required for growth on ethanol or acetate, but dispensable when fermentable carbon sources are available. Also acts on 2-methylisocitrate. This Kluyveromyces lactis (strain ATCC 8585 / CBS 2359 / DSM 70799 / NBRC 1267 / NRRL Y-1140 / WM37) (Yeast) protein is Isocitrate lyase.